A 116-amino-acid chain; its full sequence is Large ribosomal subunit protein uL22c (116 aa).

This sequence belongs to the universal ribosomal protein uL22 family. Part of the 50S ribosomal subunit.

The protein localises to the plastid. Its subcellular location is the chloroplast. Its function is as follows. This protein binds specifically to 23S rRNA. Functionally, the globular domain of the protein is located near the polypeptide exit tunnel on the outside of the subunit, while an extended beta-hairpin is found that lines the wall of the exit tunnel in the center of the 70S ribosome. In Porphyra purpurea (Red seaweed), this protein is Large ribosomal subunit protein uL22c (rpl22).